The chain runs to 476 residues: Ribulose bisphosphate carboxylase large chain (476 aa).

Substrate contacts are provided by Asn-116 and Thr-166. Catalysis depends on Lys-168, which acts as the Proton acceptor. Lys-170 provides a ligand contact to substrate. Residues Lys-194, Asp-196, and Glu-197 each coordinate Mg(2+). Lys-194 carries the post-translational modification N6-carboxylysine. The Proton acceptor role is filled by His-286. Substrate contacts are provided by Arg-287, His-319, and Ser-371.

Belongs to the RuBisCO large chain family. Type I subfamily. In terms of assembly, heterohexadecamer of 8 large chains and 8 small chains. Mg(2+) serves as cofactor.

It carries out the reaction 2 (2R)-3-phosphoglycerate + 2 H(+) = D-ribulose 1,5-bisphosphate + CO2 + H2O. The enzyme catalyses D-ribulose 1,5-bisphosphate + O2 = 2-phosphoglycolate + (2R)-3-phosphoglycerate + 2 H(+). Functionally, ruBisCO catalyzes two reactions: the carboxylation of D-ribulose 1,5-bisphosphate, the primary event in carbon dioxide fixation, as well as the oxidative fragmentation of the pentose substrate. Both reactions occur simultaneously and in competition at the same active site. This Pseudonocardia dioxanivorans (strain ATCC 55486 / DSM 44775 / JCM 13855 / CB1190) protein is Ribulose bisphosphate carboxylase large chain.